The primary structure comprises 370 residues: Chorismate synthase (370 aa).

NADP(+) is bound at residue R48. FMN is bound by residues 125–127, 241–242, G286, 301–305, and R327; these read RSS, NA, and KPTSS.

It belongs to the chorismate synthase family. As to quaternary structure, homotetramer. It depends on FMNH2 as a cofactor.

It carries out the reaction 5-O-(1-carboxyvinyl)-3-phosphoshikimate = chorismate + phosphate. The protein operates within metabolic intermediate biosynthesis; chorismate biosynthesis; chorismate from D-erythrose 4-phosphate and phosphoenolpyruvate: step 7/7. Functionally, catalyzes the anti-1,4-elimination of the C-3 phosphate and the C-6 proR hydrogen from 5-enolpyruvylshikimate-3-phosphate (EPSP) to yield chorismate, which is the branch point compound that serves as the starting substrate for the three terminal pathways of aromatic amino acid biosynthesis. This reaction introduces a second double bond into the aromatic ring system. The protein is Chorismate synthase of Ruegeria sp. (strain TM1040) (Silicibacter sp.).